Here is a 312-residue protein sequence, read N- to C-terminus: Ribosomal protein uL3 glutamine methyltransferase (312 aa).

Belongs to the protein N5-glutamine methyltransferase family. PrmB subfamily.

The enzyme catalyses L-glutaminyl-[ribosomal protein uL3] + S-adenosyl-L-methionine = N(5)-methyl-L-glutaminyl-[ribosomal protein uL3] + S-adenosyl-L-homocysteine + H(+). Methylates large ribosomal subunit protein uL3 on a specific glutamine residue. This chain is Ribosomal protein uL3 glutamine methyltransferase, found in Xylella fastidiosa (strain Temecula1 / ATCC 700964).